A 978-amino-acid chain; its full sequence is Copper-transporting ATPase HMA4 (978 aa).

A compositionally biased stretch (basic and acidic residues) spans 1 to 11; that stretch reads MEQNGENHLKD. The segment at 1–35 is disordered; it reads MEQNGENHLKDPLLQADGGGSGASPAGASPRKERK. HMA domains lie at 37-103, 111-177, and 186-252; these read RKVM…FEVD, AVCR…FGAD, and NKVH…QPPK. Cu(+) is bound by residues C48, C51, C122, and C125. 8 helical membrane passes run 280-300, 315-335, 352-372, 385-405, 545-565, 584-604, 907-927, and 935-955; these read FLWS…LPMI, MTIG…IIGW, MDVL…YIVL, FFET…LEVV, FFVP…FVAG, LALQ…LGLA, VWAL…LFPF, and WLAG…SLLL.

Belongs to the cation transport ATPase (P-type) (TC 3.A.3) family. Type IB subfamily. As to expression, highly expressed in roots. Expressed in vascular tissues of the stele, mainly in pericycle cells.

It is found in the vacuole membrane. It catalyses the reaction Cu(+)(in) + ATP + H2O = Cu(+)(out) + ADP + phosphate + H(+). Its function is as follows. Copper (Cu) transporter that mediates Cu transport in root vacuoles. Involved in Cu detoxification by sequestrating Cu into root vacuoles and limiting translocation of Cu from the roots to the shoots, and accumulation in grains. This Oryza sativa subsp. japonica (Rice) protein is Copper-transporting ATPase HMA4.